The primary structure comprises 170 residues: MASEAEKTFNRFAAFGESSSSGTEMNNKNFSKLCKDCGIMDGKTVTSTDVDIVFSKVKAKNARTITFQQFKEAVKELGQKRFKGKSPDEVLESIYGLMEGKDPATTGATKATTVGAVDRLTDTSKYTGTHKERFDESGKGKGIAGREVMNDNTGYVSGYKGAGTYDKKTK.

Positions 127 to 147 (TGTHKERFDESGKGKGIAGRE) are disordered. The span at 129-139 (THKERFDESGK) shows a compositional bias: basic and acidic residues.

Belongs to the TPPP family.

It is found in the cytoplasm. Its subcellular location is the cytosol. It localises to the cell projection. The protein localises to the cilium. The protein resides in the flagellum. Functionally, probable regulator of microtubule dynamics required for sperm motility. In contrast to other members of the family, has no microtubule bundling activity. In Macaca fascicularis (Crab-eating macaque), this protein is Tubulin polymerization-promoting protein family member 2 (TPPP2).